The following is a 202-amino-acid chain: Translation initiation factor IF-3 (202 aa).

The protein belongs to the IF-3 family. In terms of assembly, monomer.

It is found in the cytoplasm. In terms of biological role, IF-3 binds to the 30S ribosomal subunit and shifts the equilibrium between 70S ribosomes and their 50S and 30S subunits in favor of the free subunits, thus enhancing the availability of 30S subunits on which protein synthesis initiation begins. The polypeptide is Translation initiation factor IF-3 (Prochlorococcus marinus (strain MIT 9211)).